A 303-amino-acid polypeptide reads, in one-letter code: Pycsar effector protein XpPycTIR (303 aa).

Position 14–138 (14–138 (LVATLTEHRL…RRIAATLARR (125 aa))) interacts with a nucleoside 3',5'-cyclic phosphate. Residues 154-273 (RVFIMSSVEA…DLAGLTTIPY (120 aa)) are TIR-like.

The protein resides in the cytoplasm. It carries out the reaction NAD(+) + H2O = ADP-D-ribose + nicotinamide + H(+). Its function is as follows. Pycsar (pyrimidine cyclase system for antiphage resistance) provides immunity against bacteriophage. The pyrimidine cyclase (PycC) synthesizes cyclic nucleotides in response to infection; these serve as specific second messenger signals. The signals activate the adjacent effector, leading to bacterial cell death and abortive phage infection. A clade B Pycsar system. Functionally, the effector gene of a two-gene Pycsar system. Expression of this and adjacent uridylate cyclase XpPycC (AC P0DV28) confers resistance to bacteriophage T7. When cells expressing the Pycsar system are infected by phage T7 at low multiplicity of infection (0.2 MOI) the culture survivey, at 2.0 MOI bacteria enter growth arrest. The same cells enter growth arrest after exposure to 2.5 mM cUMP but not cCMP; the effector protein responds only to the cUMP usually produced by its cognate NTP cyclase. NAD(+) levels in infected cells are depleted between 5 and 10 minutes after infection with T7 at MOI of 2. Probably only responds to cUMP. This Xanthomonas perforans protein is Pycsar effector protein XpPycTIR.